Reading from the N-terminus, the 604-residue chain is NRPS-independent siderophore synthetase-like protein ankE (604 aa).

The enzyme catalyses cyclo(L-arginyl-(Z)-dehydro-4-O-homoseryl-tyrosyl) + citrate + ATP = NK13650 B + AMP + diphosphate + H(+). It functions in the pathway secondary metabolite biosynthesis. NRPS-independent siderophore synthetase-like protein; part of the ank cluster that mediates the biosynthesis of NK13650 C, a highly modified cyclo-arginine-tyrosine dipeptide. AnkE is responsible of the production of NK13650 B via ligation of citrate to the ankD product. Within the pathway, the cyclodipeptide synthase ankA acts as the scaffold-generating enzyme and is responsible for formation of the cyclo-Arg-Tyr diketopiperazine (cRY) from L-Arg and L-Tyr. The ankA product cRY is desaturated by the cytochrome P450 monooxygenase ankB to yield a dehydro-cyclodipeptide intermediate. The FAD-dependent monooxygenase ankC then installs the m-OH, ankD catalyzes the attachment of L-homoserine, and ankE ligates citrate to the ankD product to yield NK13650 B. The O-methyltransferase ankF is responsible for methylation of the C-17 phenol group of NK13650 B to produce NK13650 D. Amidation of NK13650 D with L-Asp by ankG then leads to the production of NK13650 C, whereas amidation of NK13650 B produces NK13650 A. In Aspergillus thermomutatus (Neosartorya pseudofischeri), this protein is NRPS-independent siderophore synthetase-like protein ankE.